The chain runs to 317 residues: Transcription factor EC (317 aa).

Residues Met1 to Leu44 are disordered. Positions Met1–Ser90 are necessary for transcriptional transactivation. Residues Glu34–Pro43 are compositionally biased toward polar residues. In terms of domain architecture, bHLH spans Gln110 to Leu163. A necessary for transcriptional transactivation region spans residues Thr241–Leu317. Positions Pro297 to Leu317 are disordered.

It belongs to the MiT/TFE family. In terms of assembly, homodimer. Forms heterodimers with MITF and TFE3. Interacts with MITF.

The protein localises to the nucleus. Its function is as follows. Transcriptional regulator that acts as a repressor or an activator. Acts as a transcriptional repressor on minimal promoter containing element F (that includes an E-box sequence). Binds to element F in an E-box sequence-specific manner. Acts as a transcriptional transactivator on the proximal promoter region of the tartrate-resistant acid phosphatase (TRAP) E-box containing promoter. Collaborates with MITF in target gene activation. Acts as a transcriptional repressor on minimal promoter containing mu E3 enhancer sequence. Binds to mu E3 DNA sequence of the immunoglobulin heavy-chain gene enhancer. Binds DNA in a homo- or heterodimeric form. This Bos taurus (Bovine) protein is Transcription factor EC (TFEC).